The primary structure comprises 84 residues: Small ribosomal subunit protein bS18 (84 aa).

The protein belongs to the bacterial ribosomal protein bS18 family. In terms of assembly, part of the 30S ribosomal subunit. Forms a tight heterodimer with protein bS6.

Functionally, binds as a heterodimer with protein bS6 to the central domain of the 16S rRNA, where it helps stabilize the platform of the 30S subunit. In Ruthia magnifica subsp. Calyptogena magnifica, this protein is Small ribosomal subunit protein bS18.